We begin with the raw amino-acid sequence, 358 residues long: Nitric oxide synthase oxygenase (358 aa).

Cys-62 provides a ligand contact to heme.

It belongs to the NOS family. Bacterial NOS oxygenase subfamily. As to quaternary structure, homodimer. Requires heme as cofactor. (6S)-5,6,7,8-tetrahydrofolate is required as a cofactor.

It carries out the reaction 3 reduced [flavodoxin] + 2 L-arginine + 4 O2 = 3 oxidized [flavodoxin] + 2 L-citrulline + 2 nitric oxide + 4 H2O + 5 H(+). Functionally, catalyzes the production of nitric oxide. This is Nitric oxide synthase oxygenase (nos) from Staphylococcus aureus (strain COL).